A 482-amino-acid polypeptide reads, in one-letter code: Chromosome stability protein 9 (482 aa).

2 disordered regions span residues 239–263 (SSLR…VNKN) and 418–482 (SGLA…RRIR). Positions 240-249 (SLRNSSKNNN) are enriched in low complexity. Positions 250-263 (GTVTPSTSGRVNKN) are enriched in polar residues. A compositionally biased stretch (low complexity) spans 418-437 (SGLAFSSSSNSLQQSKLPKS). Composition is skewed to polar residues over residues 440–453 (LKRS…TNTH) and 463–473 (RSSNTVLGSSK).

As to quaternary structure, component of the synapsis initiation complex composed of at least ZIP2, ZIP3, MSH4 and MSH5. Also interacts with ZIP1, MRE11, RAD51 and RAD53.

The protein resides in the nucleus. Its subcellular location is the chromosome. In terms of biological role, component of the synapsis initiation complex (SIC) necessary for the synaptonemal complex assembly. Stabilizes the ZIP2 component to the chromosomes. The SIC complex loads onto chromosomes and nucleates ZIP1 polymerization, a molecular zipper that acts to bring homologous chromosomes in close apposition, which is required for meiotic crossover. May also be involved in double strand break repair. The chain is Chromosome stability protein 9 (CST9) from Saccharomyces cerevisiae (strain ATCC 204508 / S288c) (Baker's yeast).